We begin with the raw amino-acid sequence, 180 residues long: Nucleoside triphosphate/diphosphate phosphatase (180 aa).

Arginine 26 acts as the Proton donor in catalysis. Mg(2+)-binding residues include asparagine 90, aspartate 106, aspartate 108, aspartate 110, aspartate 123, and glutamate 126.

The protein belongs to the Ntdp family. Requires Mg(2+) as cofactor.

The catalysed reaction is a ribonucleoside 5'-triphosphate + H2O = a ribonucleoside 5'-diphosphate + phosphate + H(+). The enzyme catalyses a ribonucleoside 5'-diphosphate + H2O = a ribonucleoside 5'-phosphate + phosphate + H(+). Has nucleoside phosphatase activity towards nucleoside triphosphates and nucleoside diphosphates. This chain is Nucleoside triphosphate/diphosphate phosphatase, found in Staphylococcus saprophyticus subsp. saprophyticus (strain ATCC 15305 / DSM 20229 / NCIMB 8711 / NCTC 7292 / S-41).